Here is a 291-residue protein sequence, read N- to C-terminus: Phosphate import ATP-binding protein PstB (291 aa).

Residues 45-286 enclose the ABC transporter domain; sequence YSTQNLDLWY…PADKQTEDYI (242 aa). 77–84 contributes to the ATP binding site; that stretch reads GPSGCGKS.

This sequence belongs to the ABC transporter superfamily. Phosphate importer (TC 3.A.1.7) family. As to quaternary structure, the complex is composed of two ATP-binding proteins (PstB), two transmembrane proteins (PstC and PstA) and a solute-binding protein (PstS).

The protein resides in the cell membrane. The catalysed reaction is phosphate(out) + ATP + H2O = ADP + 2 phosphate(in) + H(+). Part of the ABC transporter complex PstSACB involved in phosphate import. Responsible for energy coupling to the transport system. In Staphylococcus epidermidis (strain ATCC 12228 / FDA PCI 1200), this protein is Phosphate import ATP-binding protein PstB.